The primary structure comprises 71 residues: uncharacterized protein (71 aa).

The Sm domain occupies 15–71; that stretch reads PNFEYARRLNGKKVKIFLRNGEVLDAEVTGVSNYEIMVKVGDRNLLVFKHAIDYIEY.

This is an uncharacterized protein from Methanocaldococcus jannaschii (strain ATCC 43067 / DSM 2661 / JAL-1 / JCM 10045 / NBRC 100440) (Methanococcus jannaschii).